Here is a 430-residue protein sequence, read N- to C-terminus: Putrescine 2-hydroxylase (430 aa).

In terms of domain architecture, Rieske spans 88–203 (LYVGHQKLVP…LRDCHGLLFE (116 aa)). Residues Cys128, His130, Cys162, and His165 each contribute to the [2Fe-2S] cluster site.

It belongs to the bacterial ring-hydroxylating dioxygenase alpha subunit family. [2Fe-2S] cluster serves as cofactor.

In terms of biological role, rieske-type iron sulfur protein that can catalyze in vitro the 2-hydroxylation of putrescine, forming 2-hydroxyputrescine. May be involved in the biosynthesis of the cyclic hydroxamate siderophore alcaligin. This Bordetella bronchiseptica (strain ATCC BAA-588 / NCTC 13252 / RB50) (Alcaligenes bronchisepticus) protein is Putrescine 2-hydroxylase.